Here is a 358-residue protein sequence, read N- to C-terminus: Type II restriction enzyme SacI (358 aa).

The catalysed reaction is Endonucleolytic cleavage of DNA to give specific double-stranded fragments with terminal 5'-phosphates.. Its function is as follows. A subtype P restriction enzyme that recognizes the double-stranded sequence 5'-GAGCTC-3' and cleaves after T-5. This chain is Type II restriction enzyme SacI, found in Streptomyces achromogenes.